The primary structure comprises 977 residues: MERQKRKADIEKGLQFIQSTLPLKQEEYEAFLLKLVQNLFAEGNDLFREKDYKQALVQYMEGLNVADYAASDQVALPRELLCKLHVNRAACYFTMGLYEKALEDSEKALGLDSESIRALFRKARALNELGRHKEAYECSSRCSLALPHDESVTQLGQELAQKLGLRVRKAYKRPQELETFSLLSNGTAAGVADQGTSNGLGSIDDIETDCYVDPRGSPALLPSTPTMPLFPHVLDLLAPLDSSRTLPSTDSLDDFSDGDVFGPELDTLLDSLSLVQGGLSGSGVPSELPQLIPVFPGGTPLLPPVVGGSIPVSSPLPPASFGLVMDPSKKLAASVLDALDPPGPTLDPLDLLPYSETRLDALDSFGSTRGSLDKPDSFMEETNSQDHRPPSGAQKPAPSPEPCMPNTALLIKNPLAATHEFKQACQLCYPKTGPRAGDYTYREGLEHKCKRDILLGRLRSSEDQTWKRIRPRPTKTSFVGSYYLCKDMINKQDCKYGDNCTFAYHQEEIDVWTEERKGTLNRDLLFDPLGGVKRGSLTIAKLLKEHQGIFTFLCEICFDSKPRIISKGTKDSPSVCSNLAAKHSFYNNKCLVHIVRSTSLKYSKIRQFQEHFQFDVCRHEVRYGCLREDSCHFAHSFIELKVWLLQQYSGMTHEDIVQESKKYWQQMEAHAGKASSSMGAPRTHGPSTFDLQMKFVCGQCWRNGQVVEPDKDLKYCSAKARHCWTKERRVLLVMSKAKRKWVSVRPLPSIRNFPQQYDLCIHAQNGRKCQYVGNCSFAHSPEERDMWTFMKENKILDMQQTYDMWLKKHNPGKPGEGTPISSREGEKQIQMPTDYADIMMGYHCWLCGKNSNSKKQWQQHIQSEKHKEKVFTSDSDASGWAFRFPMGEFRLCDRLQKGKACPDGDKCRCAHGQEELNEWLDRREVLKQKLAKARKDMLLCPRDDDFGKYNFLLQEDGDLAGATPEAPAAAATATTGE.

TPR repeat units lie at residues methionine 1–glutamate 27, valine 36–alanine 69, and cysteine 82–serine 115. Serine 217 carries the phosphoserine modification. The LD motif; interaction with NSP3 motif lies at serine 248 to serine 256. Serine 364 and serine 367 each carry phosphoserine. The tract at residues phenylalanine 365–cysteine 403 is disordered. 3 C3H1-type zinc fingers span residues leucine 484–glutamate 508, valine 616–isoleucine 638, and proline 754–glutamate 782. The C2H2-type zinc finger occupies tyrosine 842–histidine 866. The segment at methionine 886 to glutamate 914 adopts a C3H1-type 4 zinc-finger fold.

In terms of assembly, (Microbial infection) Interacts (via LD motif) with rotavirus A NSP3 (via the coiled-coil region).

It is found in the nucleus. In terms of biological role, may be a specific regulator of miRNA biogenesis. Binds to microRNAs MIR7-1, MIR16-2 and MIR29A hairpins recognizing the 'ATA(A/T)' motif in the apical loop. The polypeptide is Zinc finger CCCH domain-containing protein 7B (ZC3H7B) (Homo sapiens (Human)).